The primary structure comprises 278 residues: Coiled-coil domain-containing protein 121 (278 aa).

Coiled coils occupy residues 1–30 and 105–243; these read MTDLNKHIKQAQTQRKQLLEESRELHREKL and QAMR…LIQA. Residues 253–278 form a disordered region; it reads QCLNRQDVPKTTPSLPQGTKSRINPK.

In Homo sapiens (Human), this protein is Coiled-coil domain-containing protein 121 (CCDC121).